The chain runs to 185 residues: Elongation factor P (185 aa).

It belongs to the elongation factor P family.

It is found in the cytoplasm. The protein operates within protein biosynthesis; polypeptide chain elongation. Involved in peptide bond synthesis. Stimulates efficient translation and peptide-bond synthesis on native or reconstituted 70S ribosomes in vitro. Probably functions indirectly by altering the affinity of the ribosome for aminoacyl-tRNA, thus increasing their reactivity as acceptors for peptidyl transferase. The protein is Elongation factor P of Streptococcus pyogenes serotype M4 (strain MGAS10750).